Consider the following 824-residue polypeptide: Probable acyl-CoA dehydrogenase IBR3 (824 aa).

Gly-2 carries the N-acetylglycine modification. Residues 555–565 (FAMTEPQVASS), 589–591 (WTS), Arg-706, Gln-776, and 776–780 (QVHGA) contribute to the FAD site. The short motif at 822 to 824 (SKL) is the Microbody targeting signal element.

Belongs to the acyl-CoA dehydrogenase family. Requires FAD as cofactor.

It localises to the peroxisome. It carries out the reaction a 2,3-saturated acyl-CoA + A = a 2,3-dehydroacyl-CoA + AH2. Its function is as follows. Involved with IBR1 and IBR10 in the peroxisomal beta-oxidation of indole-3-butyric acid (IBA) to form indole-3-acetic acid (IAA), a biologically active auxin. May be responsible for catalyzing the first step in IBA-CoA beta-oxidation. May play a role in defense response to pathogenic bacteria. The polypeptide is Probable acyl-CoA dehydrogenase IBR3 (Arabidopsis thaliana (Mouse-ear cress)).